A 190-amino-acid polypeptide reads, in one-letter code: ATP synthase subunit delta (190 aa).

It belongs to the ATPase delta chain family. As to quaternary structure, F-type ATPases have 2 components, F(1) - the catalytic core - and F(0) - the membrane proton channel. F(1) has five subunits: alpha(3), beta(3), gamma(1), delta(1), epsilon(1). F(0) has three main subunits: a(1), b(2) and c(10-14). The alpha and beta chains form an alternating ring which encloses part of the gamma chain. F(1) is attached to F(0) by a central stalk formed by the gamma and epsilon chains, while a peripheral stalk is formed by the delta and b chains.

It is found in the cell inner membrane. Functionally, f(1)F(0) ATP synthase produces ATP from ADP in the presence of a proton or sodium gradient. F-type ATPases consist of two structural domains, F(1) containing the extramembraneous catalytic core and F(0) containing the membrane proton channel, linked together by a central stalk and a peripheral stalk. During catalysis, ATP synthesis in the catalytic domain of F(1) is coupled via a rotary mechanism of the central stalk subunits to proton translocation. In terms of biological role, this protein is part of the stalk that links CF(0) to CF(1). It either transmits conformational changes from CF(0) to CF(1) or is implicated in proton conduction. The polypeptide is ATP synthase subunit delta (Salinibacter ruber (strain DSM 13855 / M31)).